Reading from the N-terminus, the 1008-residue chain is Probable pre-mRNA-splicing factor ATP-dependent RNA helicase mog-4 (1008 aa).

Disordered stretches follow at residues 104 to 146 (SSTK…SESD) and 169 to 202 (NKKEKDKTRNVMEKKRDDNKDKEGSSMDKLREES). Residues 127–137 (KASKPGKSVKP) show a composition bias toward low complexity. The Helicase ATP-binding domain occupies 374–538 (IEAVKEHQVL…FDDAPIFRIP (165 aa)). An ATP-binding site is contributed by 387–394 (GETGSGKT). The DEAH box signature appears at 485 to 488 (DEAH). One can recognise a Helicase C-terminal domain in the interval 563–737 (TIMQIHLTQP…NVVLMLKSLG (175 aa)). The interval 988-1008 (EDATNKKMPKNKGKSGKDLER) is disordered.

Belongs to the DEAD box helicase family. DEAH subfamily. DDX16/PRP8 sub-subfamily. In terms of assembly, interacts with mep-1 and smn-1.

It is found in the nucleus. It carries out the reaction ATP + H2O = ADP + phosphate + H(+). Functionally, ATP-binding RNA helicase involved in pre-mRNA splicing. Operates during embryogenesis. The protein is Probable pre-mRNA-splicing factor ATP-dependent RNA helicase mog-4 (mog-4) of Caenorhabditis elegans.